A 1101-amino-acid chain; its full sequence is MNYYPEVKGNPEFSAIEKEILQYWNSEKIFEESVNTRSRDRSFVFYDGPPFANGLPHYGHLLTGFIKDAVARYKTMRGFRVERKFGWDCHGLPAEMLAEKELGVSGKVSIESFGIDKFNDYCRSSIMRFTQQWREYVERQGRWVDFENGYRTMDKSFMESVMWAFHELWHKGLVYESVKVVPYSWACQTPLSNFETKMDNAYREKVSKSVTVRFKLSEQVGFVPQGVESCSILAWTTTPWTLVSNFALAINTNMDYVGAVVGAEMLIFSAGYLDHFMRYCERHSLECAKVVQIPAKELLAVKYMPPFPYFADSKNAFMVLDAEFVAEGAGTGIVHLAPGFGEDDFLLCKQHGIPNLGEESRGMLSVICPIDDAGRFTAAVGDFAGQHVFDVVDAVIRQLKEKGLWFATEQCTHSYPHCWRTDTPLIYRATSSWYVEVTKLKARMVELNKEVNWVPEHVQSGQFGKWLDGAKDWSVSRHRFWGAPVPVWRSDDPKYPRTDVYGSIKKVLPDVKALEEDFGPVEDLHRPYIDNLVRPNPDDPTGKSMMRRVPDVLDCWFESGSMPYAQMHYPFENKEFFDSHFPADFITEYIAQTRGWFYTLFVLSTGLFDRHPFKNCICHGVVLDIKGQKLSKRLNNYPDPMEMFEKYGADSVRFTMLSHAVSIGGDLLLDQDGDVVRDTLKSVVKPIWNSYSFFTVYANSDQMQGRILESLEGITNIMDQYILYECACMVVKVLEAMESSSAGVRDPYNIRLACAAIVQFSDKLNNWYIRGCRGRFWMRDKTADKSDAYNTLYTVLYHLARTIAPFLPFIAESIWLGLSFQREKSVHLADFPDASSFSAVHQYKKNAEYMQLAMDVCSHVLSLRNAHNIRVRQPLRRMVVYPYNCESLLDMPQQYRDIILNEVNVKSLQIASTIGDMASFELKLNFALLGQRVPEKVKQIITLARAGVWEVQSDGSLLLGAPGCEQCVIQKDEFSLNLKVHSEYACQIISGGVPVGVLHIDHELTRELLLEGIARDVMRLIQQARKDCGLEMLDHAEVIINTDAAEIIEAISIWYDFIKQQTFSHTLEHRPAQAVVEDCSKYTKISGKDFDIFLCKSALCS.

The 'HIGH' region signature appears at 50 to 60; sequence PFANGLPHYGH. Positions 629–633 match the 'KMSKS' region motif; it reads KLSKR. Lysine 632 serves as a coordination point for ATP.

The protein belongs to the class-I aminoacyl-tRNA synthetase family. IleS type 2 subfamily. As to quaternary structure, monomer. The cofactor is Zn(2+).

It is found in the cytoplasm. It carries out the reaction tRNA(Ile) + L-isoleucine + ATP = L-isoleucyl-tRNA(Ile) + AMP + diphosphate. Catalyzes the attachment of isoleucine to tRNA(Ile). As IleRS can inadvertently accommodate and process structurally similar amino acids such as valine, to avoid such errors it has two additional distinct tRNA(Ile)-dependent editing activities. One activity is designated as 'pretransfer' editing and involves the hydrolysis of activated Val-AMP. The other activity is designated 'posttransfer' editing and involves deacylation of mischarged Val-tRNA(Ile). In Anaplasma marginale (strain St. Maries), this protein is Isoleucine--tRNA ligase.